The sequence spans 259 residues: Probable ABC transporter permease protein RP096 (259 aa).

The next 5 helical transmembrane spans lie at 13-35 (TIKFAQSVGIFSLFSFIAISSII), 49-69 (LFIGFHSLPVVAMTTFFSGAV), 148-168 (VIAAIITMPCLVLIGDIIGVM), 195-215 (PIDVISGLIKATVFGFIISII), and 237-257 (AVVNSSILILISNYLITELFF).

It belongs to the MlaE permease family.

The protein resides in the cell inner membrane. Functionally, could be part of an ABC transporter complex. This chain is Probable ABC transporter permease protein RP096, found in Rickettsia prowazekii (strain Madrid E).